The sequence spans 249 residues: Metallo-beta-lactamase type 2 (249 aa).

The first 22 residues, Met-1 to Gly-22, serve as a signal peptide directing secretion. Residues His-98, His-100, Asp-102, His-161, and Cys-180 each coordinate Zn(2+). Lys-183 is a binding site for substrate. A Zn(2+)-binding site is contributed by His-222.

Belongs to the metallo-beta-lactamase superfamily. Class-B beta-lactamase family. As to quaternary structure, monomer. Zn(2+) serves as cofactor.

Its subcellular location is the periplasm. It carries out the reaction a beta-lactam + H2O = a substituted beta-amino acid. Inhibited by chelating agents such as EDTA, 1-10 phenanthroline and pyridine-2,6-dicarboxylic acid. Confers resistance to the different beta-lactams antibiotics (penicillin, cephalosporin and carbapenem) via the hydrolysis of the beta-lactam ring. This Elizabethkingia meningoseptica (Chryseobacterium meningosepticum) protein is Metallo-beta-lactamase type 2 (blaB1).